Consider the following 438-residue polypeptide: Adenosylhomocysteinase (438 aa).

3 residues coordinate substrate: threonine 61, aspartate 137, and glutamate 162. 163-165 contributes to the NAD(+) binding site; that stretch reads TTT. Substrate is bound by residues lysine 192 and aspartate 196. Residues asparagine 197, 226–231, glutamate 249, asparagine 284, 305–307, and asparagine 352 contribute to the NAD(+) site; these read GYGDVG and IGH.

It belongs to the adenosylhomocysteinase family. It depends on NAD(+) as a cofactor.

It is found in the cytoplasm. The enzyme catalyses S-adenosyl-L-homocysteine + H2O = L-homocysteine + adenosine. It functions in the pathway amino-acid biosynthesis; L-homocysteine biosynthesis; L-homocysteine from S-adenosyl-L-homocysteine: step 1/1. May play a key role in the regulation of the intracellular concentration of adenosylhomocysteine. In Flavobacterium psychrophilum (strain ATCC 49511 / DSM 21280 / CIP 103535 / JIP02/86), this protein is Adenosylhomocysteinase.